A 2549-amino-acid polypeptide reads, in one-letter code: Serine/threonine-protein kinase mTOR (2549 aa).

Met1 carries the post-translational modification N-acetylmethionine. The segment at 1 to 651 (MLGTGPATAT…HVVSQTAVQV (651 aa)) is interaction with NBN. HEAT repeat units lie at residues 16–53 (SSNV…MELR), 55–99 (MSQE…VEGG), 100–137 (NSTR…AMAG), 138–179 (DTFT…AISV), 180–220 (PTFF…LILT), 222–276 (QREP…RISS), 277–313 (MEGE…PRHI), 314–364 (TPFT…CCRD), 365–409 (LMEE…AFTD), 410–445 (TQYL…VAVR), 446–494 (SEFK…RAMG), 495–529 (PGIQ…RQIP), 530–563 (QLKK…GLAH), 564–596 (QLAS…EFEG), 597–636 (HSLT…SIHL), 637–683 (ISGH…DERF), 686–724 (HLAQ…MNPA), 727–766 (MPFL…NAPR), 769–811 (RPYM…VSGL), 814–853 (RKWV…STGY), 857–893 (PYRK…LLGA), 894–942 (LDPY…GNLP), 943–988 (LDEF…KCVQ), 989–1027 (FLPQ…KSHI), 1029–1068 (PYMD…GEFK), 1069–1105 (LYLP…LFGA), 1106–1144 (NLDD…RLTE), 1145–1188 (SLDF…GKKY), 1189–1225 (QIFI…LADE), 1226–1273 (EEDP…GAAR), 1274–1311 (RVSK…QAYN), and 1312–1345 (PMAR…ELAL). Ser567 carries the phosphoserine modification. Phosphothreonine is present on Thr1162. Lys1218 is modified (N6-acetyllysine). Ser1261 carries the post-translational modification Phosphoserine. TPR repeat units follow at residues 1346–1382 (TSQD…GIVL), 1383–1408 (LGER…QKGP), 1409–1442 (TPAI…HFGE), 1443–1473 (LEIQ…NKDD), 1474–1507 (PELM…VNDE), 1508–1541 (TQAK…RDTH), 1542–1574 (DGAF…LDAE), 1575–1614 (LTAM…RREI), 1615–1649 (IRQI…PHED), 1650–1693 (MRTW…PTVH), 1694–1731 (PQVT…AQHA), 1732–1786 (IATE…DRSW), 1787–1846 (YKAW…STEG), 1898–1930 (NNLQ…VKAI), 1931–1970 (QIDT…YHPQ), and 1971–2005 (ALIY…SNTL). Residues 1382-1982 (LLGERAAKCR…IYPLTVASKS (601 aa)) enclose the FAT domain. Residues Lys1662, Lys1702, and Arg1749 each contribute to the 1D-myo-inositol hexakisphosphate site. Positions 1812–1867 (DEKKKLRHASGANITNATTTATTAASAAAATSTEGSNSESEAESNESSPTPSPLQK) are disordered. Low complexity predominate over residues 1826 to 1860 (TNATTTATTAASAAAATSTEGSNSESEAESNESSP). Residues 2012–2144 (VSEELIRVAI…DLELAVPGTY (133 aa)) form a sufficient for interaction with the FKBP1A/rapamycin complex region. Residue Lys2066 forms a Glycyl lysine isopeptide (Lys-Gly) (interchain with G-Cter in ubiquitin) linkage. The PI3K/PI4K catalytic domain occupies 2156-2469 (IAPSLQVITS…GVELGEPAHK (314 aa)). Phosphoserine is present on Ser2159. The interval 2162-2168 (VITSKQR) is G-loop. A Phosphothreonine modification is found at Thr2164. 2 residues coordinate ATP: Ser2165 and Gln2167. Thr2173 carries the post-translational modification Phosphothreonine; by PKB/AKT1. Residues Leu2185, Lys2187, Glu2190, Tyr2225, Gly2238, Trp2239, Val2240, and Thr2245 each coordinate ATP. An interaction with MLST8 region spans residues 2258–2296 (KILLNIEHRIMLRMAPDYDHLTLMQKVEVFEHAVNNTAG). The interval 2335-2343 (GLGDRHPSN) is catalytic loop. A Mg(2+)-binding site is contributed by Asn2343. Positions 2345 and 2356 each coordinate ATP. Positions 2355–2380 (HIDFGDCFEVAMTREKFPEKIPFRLT) are activation loop. Asp2357 is a Mg(2+) binding site. At Thr2446 the chain carries Phosphothreonine; by RPS6KB1. Position 2448 is a phosphoserine; by RPS6KB1 (Ser2448). The residue at position 2478 (Ser2478) is a Phosphoserine. Ser2481 bears the Phosphoserine; by autocatalysis mark. Positions 2517 to 2549 (DTLDVPTQVELLIKQATSHENLCQCYIGWCPFW) constitute an FATC domain.

It belongs to the PI3/PI4-kinase family. In terms of assembly, part of the mechanistic target of rapamycin complex 1 (mTORC1) which contains MTOR, MLST8 and RPTOR. The mTORC1 complex is a 1 Md obligate dimer of two stoichiometric heterotetramers with overall dimensions of 290 A x 210 A x 135 A. It has a rhomboid shape and a central cavity, the dimeric interfaces are formed by interlocking interactions between the two MTOR and the two RPTOR subunits. The MLST8 subunit forms distal foot-like protuberances, and contacts only one MTOR within the complex, while the small AKT1S1/PRAS40 localizes to the midsection of the central core, in close proximity to RPTOR. mTORC1 associates with AKT1S1/PRAS40, which inhibits its activity by blocking MTOR substrate-recruitment site. Component of the mechanistic target of rapamycin complex 2 (mTORC2), consisting in two heterotretramers composed of MTOR, MLST8, RICTOR and MAPKAP1/SIN1. Interacts with PLPP7 and PML. Interacts with PRR5 and RICTOR; the interaction is direct within the mTORC2 complex and interaction with RICTOR is enhanced by deubiquitination of RICTOR by USP9X. mTORC1 and mTORC2 associate with DEPTOR, which regulates their activity. Interacts with WAC; WAC positively regulates MTOR activity by promoting the assembly of the TTT complex composed of TELO2, TTI1 and TTI2 and the RUVBL complex composed of RUVBL1 and RUVBL2 into the TTT-RUVBL complex which leads to the dimerization of the mTORC1 complex and its subsequent activation. Interacts with UBQLN1. Interacts with TTI1 and TELO2. Interacts with CLIP1; phosphorylates and regulates CLIP1. Interacts with NBN. Interacts with HTR6. Interacts with BRAT1. Interacts with MEAK7 (via C-terminal domain); the interaction increases upon nutrient stimulation. Interacts with TM4SF5; the interaction is positively regulated by arginine and is negatively regulated by leucine. Interacts with GPR137B. Interacts with NCKAP1L. Interacts with TPCN1 and TPCN2; the interaction is required for TPCN1 and TPCN2 sensitivity to ATP. Interacts with ATP6V1A and with CRYAB, forming a ternary complex. Interacts with SLC38A7; this interaction mediates the recruitment of mTORC1 to the lysosome and its subsequent activation. Interacts with TSPAN8. In terms of processing, autophosphorylates when part of mTORC1 or mTORC2. Phosphorylation at Ser-1261, Ser-2159 and Thr-2164 promotes autophosphorylation. Phosphorylated at Ser-2448 by RPS6KB1. Phosphorylation in the kinase domain modulates the interactions of MTOR with RPTOR and AKT1S1/PRAS40 and leads to increased intrinsic mTORC1 kinase activity. Phosphorylation at Ser-2159 by TBK1 in response to growth factors and pathogen recognition receptors promotes mTORC1 activity. Phosphorylation at Ser-2159 by TBK1 in response to EGF growth factor promotes mTORC2 activity, leading to AKT1 phosphorylation and activation. Phosphorylation at Thr-2173 in the ATP-binding region by AKT1 strongly reduces kinase activity. Ubiquitinated at Lys-2066 by the SCF(FBXO22) complex via 'Lys-27'-linked ubiquitination prevents mTORC1 substrate recruitment.

It is found in the lysosome membrane. The protein resides in the endoplasmic reticulum membrane. Its subcellular location is the golgi apparatus membrane. The protein localises to the cell membrane. It localises to the mitochondrion outer membrane. It is found in the cytoplasm. The protein resides in the nucleus. Its subcellular location is the PML body. The protein localises to the microsome membrane. It localises to the cytoplasmic vesicle. It is found in the phagosome. The enzyme catalyses L-seryl-[protein] + ATP = O-phospho-L-seryl-[protein] + ADP + H(+). It catalyses the reaction L-threonyl-[protein] + ATP = O-phospho-L-threonyl-[protein] + ADP + H(+). The catalysed reaction is L-tyrosyl-[protein] + ATP = O-phospho-L-tyrosyl-[protein] + ADP + H(+). The mTORC1 complex is activated in response to nutrients, growth factors or amino acids: activation requires relocalization of the mTORC1 complex to lysosomes that is mediated by the Ragulator complex, SLC38A9, and the Rag GTPases RagA/RRAGA, RagB/RRAGB, RagC/RRAGC and RagD/RRAGD. Activation of mTORC1 by growth factors such as insulin involves AKT1-mediated phosphorylation of TSC1-TSC2, which leads to the activation of the RHEB GTPase a potent activator of the protein kinase activity of mTORC1. Insulin-stimulated and amino acid-dependent phosphorylation at Ser-1261 promotes autophosphorylation and the activation of mTORC1. On the other hand, low cellular energy levels can inhibit mTORC1 through activation of PRKAA1 while hypoxia inhibits mTORC1 through a REDD1-dependent mechanism which may also require PRKAA1. The kinase activity of MTOR within the mTORC1 complex is positively regulated by MLST8. The kinase activity of MTOR is inhibited by DEPTOR and AKT1S1. The non-canonical mTORC1 complex is independent of the RHEB GTPase and specifically mediates phosphorylation of MiT/TFE factors TFEB and TFE3 but not other mTORC1 substrates: it is activated by FLCN, which activates Rag GTPases RagC/RRAGC and RagD/RRAGD. MTOR is the target of the immunosuppressive and anti-cancer drug rapamycin which acts in complex with FKBP1A/FKBP12, and specifically inhibits its kinase activity. mTORC2 is also activated by growth factors, but seems to be nutrient-insensitive. mTORC2 associates and is directly activated by ribosomes. mTORC2 may also be regulated by RHEB but in an indirect manner through the PI3K signaling pathway. Functionally, serine/threonine protein kinase which is a central regulator of cellular metabolism, growth and survival in response to hormones, growth factors, nutrients, energy and stress signals. MTOR directly or indirectly regulates the phosphorylation of at least 800 proteins. Functions as part of 2 structurally and functionally distinct signaling complexes mTORC1 and mTORC2 (mTOR complex 1 and 2). In response to nutrients, growth factors or amino acids, mTORC1 is recruited to the lysosome membrane and promotes protein, lipid and nucleotide synthesis by phosphorylating key regulators of mRNA translation and ribosome synthesis. This includes phosphorylation of EIF4EBP1 and release of its inhibition toward the elongation initiation factor 4E (eiF4E). Moreover, phosphorylates and activates RPS6KB1 and RPS6KB2 that promote protein synthesis by modulating the activity of their downstream targets including ribosomal protein S6, eukaryotic translation initiation factor EIF4B, and the inhibitor of translation initiation PDCD4. Stimulates the pyrimidine biosynthesis pathway, both by acute regulation through RPS6KB1-mediated phosphorylation of the biosynthetic enzyme CAD, and delayed regulation, through transcriptional enhancement of the pentose phosphate pathway which produces 5-phosphoribosyl-1-pyrophosphate (PRPP), an allosteric activator of CAD at a later step in synthesis, this function is dependent on the mTORC1 complex. Regulates ribosome synthesis by activating RNA polymerase III-dependent transcription through phosphorylation and inhibition of MAF1 an RNA polymerase III-repressor. Activates dormant ribosomes by mediating phosphorylation of SERBP1, leading to SERBP1 inactivation and reactivation of translation. In parallel to protein synthesis, also regulates lipid synthesis through SREBF1/SREBP1 and LPIN1. To maintain energy homeostasis mTORC1 may also regulate mitochondrial biogenesis through regulation of PPARGC1A. In the same time, mTORC1 inhibits catabolic pathways: negatively regulates autophagy through phosphorylation of ULK1. Under nutrient sufficiency, phosphorylates ULK1 at 'Ser-758', disrupting the interaction with AMPK and preventing activation of ULK1. Also prevents autophagy through phosphorylation of the autophagy inhibitor DAP. Also prevents autophagy by phosphorylating RUBCNL/Pacer under nutrient-rich conditions. Prevents autophagy by mediating phosphorylation of AMBRA1, thereby inhibiting AMBRA1 ability to mediate ubiquitination of ULK1 and interaction between AMBRA1 and PPP2CA. mTORC1 exerts a feedback control on upstream growth factor signaling that includes phosphorylation and activation of GRB10 a INSR-dependent signaling suppressor. Among other potential targets mTORC1 may phosphorylate CLIP1 and regulate microtubules. The mTORC1 complex is inhibited in response to starvation and amino acid depletion. The non-canonical mTORC1 complex, which acts independently of RHEB, specifically mediates phosphorylation of MiT/TFE factors TFEB and TFE3 in the presence of nutrients, promoting their cytosolic retention and inactivation. Upon starvation or lysosomal stress, inhibition of mTORC1 induces dephosphorylation and nuclear translocation of TFEB and TFE3, promoting their transcription factor activity. The mTORC1 complex regulates pyroptosis in macrophages by promoting GSDMD oligomerization. MTOR phosphorylates RPTOR which in turn inhibits mTORC1. As part of the mTORC2 complex, MTOR transduces signals from growth factors to pathways involved in proliferation, cytoskeletal organization, lipogenesis and anabolic output. In response to growth factors, mTORC2 phosphorylates and activates AGC protein kinase family members, including AKT (AKT1, AKT2 and AKT3), PKC (PRKCA, PRKCB and PRKCE) and SGK1. In contrast to mTORC1, mTORC2 is nutrient-insensitive. mTORC2 plays a critical role in AKT1 activation by mediating phosphorylation of different sites depending on the context, such as 'Thr-450', 'Ser-473', 'Ser-477' or 'Thr-479', facilitating the phosphorylation of the activation loop of AKT1 on 'Thr-308' by PDPK1/PDK1 which is a prerequisite for full activation. mTORC2 also regulates the phosphorylation of SGK1 at 'Ser-422'. mTORC2 may regulate the actin cytoskeleton, through phosphorylation of PRKCA, PXN and activation of the Rho-type guanine nucleotide exchange factors RHOA and RAC1A or RAC1B. The mTORC2 complex also phosphorylates various proteins involved in insulin signaling, such as FBXW8 and IGF2BP1. May also regulate insulin signaling by acting as a tyrosine protein kinase that catalyzes phosphorylation of IGF1R and INSR. Regulates osteoclastogenesis by adjusting the expression of CEBPB isoforms. Plays an important regulatory role in the circadian clock function; regulates period length and rhythm amplitude of the suprachiasmatic nucleus (SCN) and liver clocks. The protein is Serine/threonine-protein kinase mTOR of Rattus norvegicus (Rat).